The chain runs to 179 residues: Large ribosomal subunit protein uL6 (179 aa).

It belongs to the universal ribosomal protein uL6 family. As to quaternary structure, part of the 50S ribosomal subunit.

Functionally, this protein binds to the 23S rRNA, and is important in its secondary structure. It is located near the subunit interface in the base of the L7/L12 stalk, and near the tRNA binding site of the peptidyltransferase center. The polypeptide is Large ribosomal subunit protein uL6 (Beutenbergia cavernae (strain ATCC BAA-8 / DSM 12333 / CCUG 43141 / JCM 11478 / NBRC 16432 / NCIMB 13614 / HKI 0122)).